We begin with the raw amino-acid sequence, 252 residues long: 3-deoxy-manno-octulosonate cytidylyltransferase (252 aa).

This sequence belongs to the KdsB family.

Its subcellular location is the cytoplasm. It carries out the reaction 3-deoxy-alpha-D-manno-oct-2-ulosonate + CTP = CMP-3-deoxy-beta-D-manno-octulosonate + diphosphate. It functions in the pathway nucleotide-sugar biosynthesis; CMP-3-deoxy-D-manno-octulosonate biosynthesis; CMP-3-deoxy-D-manno-octulosonate from 3-deoxy-D-manno-octulosonate and CTP: step 1/1. It participates in bacterial outer membrane biogenesis; lipopolysaccharide biosynthesis. Its function is as follows. Activates KDO (a required 8-carbon sugar) for incorporation into bacterial lipopolysaccharide in Gram-negative bacteria. The polypeptide is 3-deoxy-manno-octulosonate cytidylyltransferase (Thiobacillus denitrificans (strain ATCC 25259 / T1)).